The sequence spans 233 residues: MPKHGKRYRALEGKVDRNKQYSIDEAAALVKELATAKFDETVEVHFRLGIDPRKSDQNVRGTVALPHGTGRSVRVAVITKGENVQAAEAAGADVVGSDELIERIAGGFMDFDAVVATPDMMAQIGQKLARLLGPRGLLPNPKSGTVGADVAGMVRGLKAGRIEFRNDKTGVVHAPIGKASFESGNLSANYQALISALEGAKPGTAKGVFLRSAYLTTTMGPSIPLALGGAALA.

It belongs to the universal ribosomal protein uL1 family. As to quaternary structure, part of the 50S ribosomal subunit.

Functionally, binds directly to 23S rRNA. Forms the L1 stalk. Unlike the case in the Thermus thermophilus 70S ribosome, this protein is not seen to block the exit path of the E site tRNA. It is clear that the protein in the structure is flexible however, so this is probably due to its position in these crystals. Its function is as follows. Protein L1 is also a translational repressor protein, it controls the translation of the L11 operon by binding to its mRNA. This is Large ribosomal subunit protein uL1 (rplA) from Deinococcus radiodurans (strain ATCC 13939 / DSM 20539 / JCM 16871 / CCUG 27074 / LMG 4051 / NBRC 15346 / NCIMB 9279 / VKM B-1422 / R1).